A 428-amino-acid chain; its full sequence is Histidine--tRNA ligase (428 aa).

Belongs to the class-II aminoacyl-tRNA synthetase family. As to quaternary structure, homodimer.

It localises to the cytoplasm. The enzyme catalyses tRNA(His) + L-histidine + ATP = L-histidyl-tRNA(His) + AMP + diphosphate + H(+). The protein is Histidine--tRNA ligase of Lactobacillus johnsonii (strain CNCM I-12250 / La1 / NCC 533).